Here is a 1150-residue protein sequence, read N- to C-terminus: MSKKKPIVQYYDPFDLWPSIATDIESKIPLRNLQWVESYQYKKHTITSLDLEFLPWLEEFSSQDTSKDPTLLNIPLVNMLFLPEQDGEIYKTQHKPLATKWFQKVSKNENQSWMIVLVAEAQQAKRSNSLRRTHSRSSSYFAVKSTIDRVRGDFNTGNINHCVRLDYVRFGTPDAEGWNEFLKCLEWAVLSSLDSRFLQLSEQIRSIKLFDSSIFSDYLLFFLQKERLAASFFDLVLYRESLEQCEDMFSTLSKIISAIDGKKENISKYLGEGSDAQPDLKDFNSSFLILGSRYNTLHNLLADGDFTLFHFTLFLLSKIILLNLKISDYEKAFSTLQQALLFLTSSFFNEFVQNNLEIIAAFNYDCYTLLFKKITEAIHNNDTPIPLCCAKILLYARRQLTRMARWNNLIDDSSPLLWREPSFPLIEHHDNSLLDNRFQKLSETISSTSSFLSEYYRLSSEALSIFKAYKNRYSFVNTACDTGLAQYLLEDYENAYASLKNVDVQTAWSNDPLEEKWSKFYVDLLEKLEKFDEALEFASAISKGKVSIYNKNKILELSKKTAKSKVWNLDDFFTIEIPHMMAVVPHDDGINLSFMCESKVFDLESVDSVTCNYVLSSSKNPMNLLFTLHNSITDGKLNVHCNDIIPGRYHLKTIVFKLKDSVLSFQKDCLHSNKQIEVLNPTKHSNHLYILQSKISQQFQNDGIFACIPIMFGERFYKASCSEIKLSYIENSGFTNLEKSFLSEESHCGLESKTDSLVIKNIQKVPGVAKLYIPLTNTPVEGNEFLINLSYILESGQTVRFGKVLHIENAGIVEANCEKTNNMRDPLTSTIFLHIQPKEPIIFCSWNCMRKTKQGTYDNVFDIPYNIPVLSPMDCFTSCHFDSDMSIDLKFSMNCLRLADVVFMKLCVNIWERFDFIDIEHIMPLLDHACQQISLSNITQGTVVLPEEIRKLNGKKILNSFFDNEELRNEFSEFIQHLESEVSFNSLRSFVQEFEKKERLKNLPFYFSLHQTIGPLPFKDEMQSTTIEYIWKIPQKVLLNKPTEITLTFLRSLTHSKKEKQGQSFEIFYNFPAYTTTILFAGPTQRKIVWEKNQTTAQEQVTAVFLTAGRVMLPEVVVHSKDDDISILKNTKYTLVGRPLNDQPDLDYAP.

It belongs to the TMEM1 family.

This is an uncharacterized protein from Schizosaccharomyces pombe (strain 972 / ATCC 24843) (Fission yeast).